A 155-amino-acid polypeptide reads, in one-letter code: 1,4-dihydroxy-2-naphthoyl-CoA hydrolase (155 aa).

The active site involves Asp27.

The protein belongs to the 4-hydroxybenzoyl-CoA thioesterase family. DHNA-CoA hydrolase subfamily.

It catalyses the reaction 1,4-dihydroxy-2-naphthoyl-CoA + H2O = 1,4-dihydroxy-2-naphthoate + CoA + H(+). The protein operates within cofactor biosynthesis; phylloquinone biosynthesis. Its pathway is quinol/quinone metabolism; 1,4-dihydroxy-2-naphthoate biosynthesis; 1,4-dihydroxy-2-naphthoate from chorismate: step 7/7. Its function is as follows. Catalyzes the hydrolysis of 1,4-dihydroxy-2-naphthoyl-CoA (DHNA-CoA) to 1,4-dihydroxy-2-naphthoate (DHNA), a reaction involved in phylloquinone (vitamin K1) biosynthesis. In Prochlorococcus marinus (strain NATL2A), this protein is 1,4-dihydroxy-2-naphthoyl-CoA hydrolase.